A 158-amino-acid polypeptide reads, in one-letter code: Low molecular weight phosphotyrosine protein phosphatase (158 aa).

Alanine 2 carries the post-translational modification N-acetylalanine. Cysteine 13 functions as the Nucleophile in the catalytic mechanism. The active site involves arginine 19. Residue aspartate 130 is the Proton donor of the active site. Phosphotyrosine is present on residues tyrosine 132 and tyrosine 133.

This sequence belongs to the low molecular weight phosphotyrosine protein phosphatase family. Interacts with EPHA2; dephosphorylates EPHA2. Interacts with EPHB1. As to quaternary structure, interacts with the SH3 domain of SPTAN1. There is no interaction observed for isoforms 2 or 3. In terms of processing, phosphorylated by LCK. Phosphorylation at Tyr-132 increases its phosphatase activity. Post-translationally, not phosphorylated. As to expression, expressed in T-lymphocytes.

The protein localises to the cytoplasm. It carries out the reaction O-phospho-L-tyrosyl-[protein] + H2O = L-tyrosyl-[protein] + phosphate. The enzyme catalyses a phosphate monoester + H2O = an alcohol + phosphate. Its activity is regulated as follows. Inhibited by sulfhydryl reagents. In terms of biological role, acts on tyrosine phosphorylated proteins, low-MW aryl phosphates and natural and synthetic acyl phosphates with differences in substrate specificity between isoform 1 and isoform 2. Does not possess phosphatase activity. The polypeptide is Low molecular weight phosphotyrosine protein phosphatase (Homo sapiens (Human)).